The primary structure comprises 354 residues: MGEQPIFSTRAHVFQIDPNTKKNWVPTSKHAVTVSYFYDSTRNVYRIISLDGSKAIINSTITPNMTFTKTSQKFGQWADSRANTVYGLGFSSEHHLSKFAEKFQEFKEAARLAKEKSQEKMELTSTPSQESAGGDLQSPLTPESINGTDDERTPDLTQNSEPRPEPTQNALPFTHSSAISKHWEAELATLKGNNAKLTAALLESTANVKQWKQQLAAYQEEAERLHKRVTELECVSSQANAVHTHKTELNQTIQELEETLKVKEEEIERLKQEIDNARELQEQRDSLTQKLQEVEIRNKDLEGQLSDLEQRLEKSQNEQEAFRNNLKTLLEILDGKIFELTELRDNLAKLLERS.

The WH1 domain occupies 1–110; the sequence is MGEQPIFSTR…EKFQEFKEAA (110 aa). The residue at position 2 (G2) is an N-acetylglycine. Positions 114 to 172 are disordered; that stretch reads KEKSQEKMELTSTPSQESAGGDLQSPLTPESINGTDDERTPDLTQNSEPRPEPTQNALP. Composition is skewed to polar residues over residues 138-147 and 155-172; these read SPLTPESING and DLTQNSEPRPEPTQNALP. Positions 181–352 form a coiled coil; it reads KHWEAELATL…LRDNLAKLLE (172 aa). The interval 290 to 354 is required for tetramerization; that stretch reads KLQEVEIRNK…DNLAKLLERS (65 aa). S306 is modified (phosphoserine).

The protein belongs to the Homer family. In terms of assembly, tetramer; this tetrameric structure is critical for forming the high-order complex with SHANK1, which in turn is necessary for the structural and functional integrity of dendritic spines. Interacts with GRM1, GRM5, ITPR1, DNM3, RYR1, RYR2 and SHANK3. Interacts with IFT57 and OPHN1. Encodes a coiled-coil structure that mediates homo- and heteromultimerization. Interacts with SHANK1; forms high-order polymerized complex with a mesh-like network structure, at least composed of SHANK1, HOMER1 and DLGAP1; the complex formation is SHANK1 multimerization dependent. Interacts with NFATC4. Interacts with DAGLA (via PPXXF motif); this interaction is required for the cell membrane localization of DAGLA. Interacts with SRGAP2.

It is found in the cytoplasm. It localises to the postsynaptic density. Its subcellular location is the synapse. The protein resides in the cell projection. The protein localises to the dendritic spine. Postsynaptic density scaffolding protein. Binds and cross-links cytoplasmic regions of GRM1, GRM5, ITPR1, DNM3, RYR1, RYR2, SHANK1 and SHANK3. By physically linking GRM1 and GRM5 with ER-associated ITPR1 receptors, it aids the coupling of surface receptors to intracellular calcium release. May also couple GRM1 to PI3 kinase through its interaction with AGAP2. Forms a high-order complex with SHANK1, which in turn is necessary for the structural and functional integrity of dendritic spines. Negatively regulates T cell activation by inhibiting the calcineurin-NFAT pathway. Acts by competing with calcineurin/PPP3CA for NFAT protein binding, hence preventing NFAT activation by PPP3CA. This Bos taurus (Bovine) protein is Homer protein homolog 1.